The sequence spans 57 residues: uncharacterized protein (57 aa).

A disordered region spans residues 1–57 (MANHRGGSGNFAEDRERASEAGKKGGQHSGGNFKNDPQRASEAGKKGGKSSHGKSDN). Composition is skewed to basic and acidic residues over residues 12 to 23 (AEDRERASEAGK) and 36 to 45 (DPQRASEAGK). The segment covering 46–57 (KGGKSSHGKSDN) has biased composition (basic residues).

This sequence belongs to the con-10 family.

This is an uncharacterized protein from Escherichia coli (strain K12).